The chain runs to 221 residues: PKHD-type hydroxylase P9303_20491 (221 aa).

The 95-residue stretch at 80 to 174 (HIHGVMFSRS…RLVCVGWIQS (95 aa)) folds into the Fe2OG dioxygenase domain. Fe cation contacts are provided by His98, Asp100, and His155. Arg165 lines the 2-oxoglutarate pocket.

Fe(2+) serves as cofactor. It depends on L-ascorbate as a cofactor.

The sequence is that of PKHD-type hydroxylase P9303_20491 from Prochlorococcus marinus (strain MIT 9303).